We begin with the raw amino-acid sequence, 492 residues long: Proline--tRNA ligase (492 aa).

Belongs to the class-II aminoacyl-tRNA synthetase family. ProS type 3 subfamily. Homodimer.

It localises to the cytoplasm. It catalyses the reaction tRNA(Pro) + L-proline + ATP = L-prolyl-tRNA(Pro) + AMP + diphosphate. In terms of biological role, catalyzes the attachment of proline to tRNA(Pro) in a two-step reaction: proline is first activated by ATP to form Pro-AMP and then transferred to the acceptor end of tRNA(Pro). The sequence is that of Proline--tRNA ligase from Flavobacterium psychrophilum (strain ATCC 49511 / DSM 21280 / CIP 103535 / JIP02/86).